The following is a 421-amino-acid chain: ATP-dependent RNA helicase RhlB (421 aa).

The short motif at 9 to 37 (QKFSDFALHPKVVEALEKKGFHNCTPIQA) is the Q motif element. The region spanning 40-219 (LPLTLAGRDV…FEQMNNAEYI (180 aa)) is the Helicase ATP-binding domain. ATP is bound at residue 53–60 (AQTGTGKT). The DEAD box motif lies at 165 to 168 (DEAD). In terms of domain architecture, Helicase C-terminal spans 245-390 (RLLQTLIEEE…VSKYNPDALM (146 aa)). The interval 392–421 (DLPKPLRLTRPRTGNGPRRTGTPRNRRRSG) is disordered. The span at 402 to 414 (PRTGNGPRRTGTP) shows a compositional bias: low complexity.

Belongs to the DEAD box helicase family. RhlB subfamily. In terms of assembly, component of the RNA degradosome, which is a multiprotein complex involved in RNA processing and mRNA degradation.

Its subcellular location is the cytoplasm. It carries out the reaction ATP + H2O = ADP + phosphate + H(+). DEAD-box RNA helicase involved in RNA degradation. Has RNA-dependent ATPase activity and unwinds double-stranded RNA. This is ATP-dependent RNA helicase RhlB from Escherichia coli O17:K52:H18 (strain UMN026 / ExPEC).